We begin with the raw amino-acid sequence, 114 residues long: Transcription factor S1 (114 aa).

The N-ZR stretch occupies residues 1 to 43 (MIVVKFCPKCNSMMVPKKSNGKNVYRCTKCGYEKEVPETTIVV). The Zn(2+) site is built by Cys-7, Cys-10, Cys-27, Cys-30, Cys-75, and Cys-78. The segment at 63–114 (MPSGAQKIKGVLCPSCKNDEAYFWILQTRRADEPPTRFYKCTKCGKVWREYE) is C-ZR. The TFIIS-type zinc-finger motif lies at 71–111 (KGVLCPSCKNDEAYFWILQTRRADEPPTRFYKCTKCGKVWR). Active-site residues include Asp-94 and Glu-95. Zn(2+) is bound by residues Cys-103 and Cys-106.

This sequence belongs to the archaeal RpoM/eukaryotic RPA12/RPB9/RPC11 RNA polymerase family. As to quaternary structure, interacts with RNA polymerase; probably competes with TFS4 for the same binding site. Zn(2+) serves as cofactor.

Functionally, induces RNA cleavage activity in the RNA polymerase. Induces rapid cleavage of a stalled transcription elongation complex with a 2-nucleotide reduction at the 3' end of the nascent RNA. Truncated RNA is able to resume elongation. During transcription elongation it enhances processivity. Involved in transcriptional proofreading and fidelity. Misincorporation of nucleotides during elongation of transcription leads to arrested elongation complexes which are rescued by TFS-promoted removal of a dinucleotide from the 3'-end. TFS1 is able to induce a cleavage resynthesis cycle in stalled elongation complexes (resulting from the next missing nucleotide or a reduced incorporation rate of a wrong nucleotide) preventing misincorporation and enabling proofreading in a post-incorporation manner. Pausing of elongation complexes is the main determinant of TFS-induced RNA cleavage. The sequence is that of Transcription factor S1 from Saccharolobus solfataricus (strain ATCC 35092 / DSM 1617 / JCM 11322 / P2) (Sulfolobus solfataricus).